A 313-amino-acid polypeptide reads, in one-letter code: Formimidoylglutamase (313 aa).

Positions 130, 155, 157, 159, 241, and 243 each coordinate Mn(2+).

It belongs to the arginase family. The cofactor is Mn(2+).

The catalysed reaction is N-formimidoyl-L-glutamate + H2O = formamide + L-glutamate. It participates in amino-acid degradation; L-histidine degradation into L-glutamate; L-glutamate from N-formimidoyl-L-glutamate (hydrolase route): step 1/1. Catalyzes the conversion of N-formimidoyl-L-glutamate to L-glutamate and formamide. This Salmonella paratyphi A (strain ATCC 9150 / SARB42) protein is Formimidoylglutamase.